The following is a 106-amino-acid chain: Large ribosomal subunit protein eL30 (106 aa).

This sequence belongs to the eukaryotic ribosomal protein eL30 family.

The polypeptide is Large ribosomal subunit protein eL30 (rpl30e) (Sulfurisphaera tokodaii (strain DSM 16993 / JCM 10545 / NBRC 100140 / 7) (Sulfolobus tokodaii)).